A 159-amino-acid chain; its full sequence is Small ribosomal subunit protein uS7m (159 aa).

The protein belongs to the universal ribosomal protein uS7 family. In terms of assembly, part of the small ribosomal subunit.

It localises to the mitochondrion. One of the primary rRNA binding proteins, it binds directly to the small rRNA where it nucleates assembly of the head domain of the small subunit. This chain is Small ribosomal subunit protein uS7m (RPS7), found in Reclinomonas americana.